The chain runs to 286 residues: Bifunctional protein FolD (286 aa).

NADP(+) is bound by residues 165-167 (GRS), S190, and V231.

The protein belongs to the tetrahydrofolate dehydrogenase/cyclohydrolase family. Homodimer.

It carries out the reaction (6R)-5,10-methylene-5,6,7,8-tetrahydrofolate + NADP(+) = (6R)-5,10-methenyltetrahydrofolate + NADPH. The catalysed reaction is (6R)-5,10-methenyltetrahydrofolate + H2O = (6R)-10-formyltetrahydrofolate + H(+). It functions in the pathway one-carbon metabolism; tetrahydrofolate interconversion. Functionally, catalyzes the oxidation of 5,10-methylenetetrahydrofolate to 5,10-methenyltetrahydrofolate and then the hydrolysis of 5,10-methenyltetrahydrofolate to 10-formyltetrahydrofolate. This Bacillus anthracis (strain A0248) protein is Bifunctional protein FolD.